The following is a 158-amino-acid chain: 2-C-methyl-D-erythritol 2,4-cyclodiphosphate synthase (158 aa).

Aspartate 9 and histidine 11 together coordinate a divalent metal cation. Residues 9–11 (DVH) and 35–36 (HS) contribute to the 4-CDP-2-C-methyl-D-erythritol 2-phosphate site. An a divalent metal cation-binding site is contributed by histidine 43. Residues 57–59 (DIG), 62–66 (FPDTD), 101–107 (AQAPKMA), 133–136 (TTTE), phenylalanine 140, and arginine 143 contribute to the 4-CDP-2-C-methyl-D-erythritol 2-phosphate site.

This sequence belongs to the IspF family. Homotrimer. Requires a divalent metal cation as cofactor.

It carries out the reaction 4-CDP-2-C-methyl-D-erythritol 2-phosphate = 2-C-methyl-D-erythritol 2,4-cyclic diphosphate + CMP. The protein operates within isoprenoid biosynthesis; isopentenyl diphosphate biosynthesis via DXP pathway; isopentenyl diphosphate from 1-deoxy-D-xylulose 5-phosphate: step 4/6. Its function is as follows. Involved in the biosynthesis of isopentenyl diphosphate (IPP) and dimethylallyl diphosphate (DMAPP), two major building blocks of isoprenoid compounds. Catalyzes the conversion of 4-diphosphocytidyl-2-C-methyl-D-erythritol 2-phosphate (CDP-ME2P) to 2-C-methyl-D-erythritol 2,4-cyclodiphosphate (ME-CPP) with a corresponding release of cytidine 5-monophosphate (CMP). The polypeptide is 2-C-methyl-D-erythritol 2,4-cyclodiphosphate synthase (Vibrio vulnificus (strain YJ016)).